The primary structure comprises 1499 residues: Collagen alpha-2(V) chain (1499 aa).

The N-terminal stretch at 1–26 (MMANWAEARPLLILIVLLGQFVSIKA) is a signal peptide. The region spanning 39 to 97 (IACTQNGQMYLNRDIWKPAPCQICVCDNGAILCDKIECQDVLDCADPVTPPGECCPVCS) is the VWFC domain. Residues 104–1268 (NTNFGRGRKG…DDKNKTDPGV (1165 aa)) form a disordered region. Positions 170–182 (PGAPGPPGHPSHP) are enriched in pro residues. Positions 212–227 (PGSVGPVGPRGPQGLQ) are enriched in low complexity. Positions 236 to 248 (TGPPGEPGDPGPM) are enriched in pro residues. 3 positions are modified to hydroxyproline: P290, P293, and P296. Low complexity-rich tracts occupy residues 322–340 (EAGPTGPMGAMGPLGPRGM) and 427–443 (TPGAKGPTGSPGTSGPP). The Cell attachment site motif lies at 506–508 (RGD). Low complexity-rich tracts occupy residues 604–626 (SIGIRGQPGSMGLPGPKGSSGDP) and 694–709 (DQGVPGDPGAVGPLGP). A hydroxyproline mark is found at P611 and P617. Residues 710 to 721 (RGERGNPGERGE) are compositionally biased toward basic and acidic residues. Over residues 732–741 (GMAGGHGPDG) the composition is skewed to gly residues. Positions 742–758 (PKGSPGPSGTPGDTGPP) are enriched in low complexity. Residues 776–787 (KGDRGGIGEKGA) show a composition bias toward basic and acidic residues. Over residues 826–841 (PPGSRGNPGSRGENGP) the composition is skewed to low complexity. The span at 894 to 903 (GLKGGRGTQG) shows a compositional bias: gly residues. 3-hydroxyproline; partial is present on P919. Over residues 919–929 (PPGPAGAPGPA) the composition is skewed to pro residues. Short sequence motifs (cell attachment site) lie at residues 944–946 (RGD), 1067–1069 (RGD), 1070–1072 (RGD), 1100–1102 (RGD), 1127–1129 (RGD), and 1136–1138 (RGD). Positions 1063–1072 (AVGERGDRGD) are enriched in basic and acidic residues. Low complexity predominate over residues 1093 to 1114 (APGDAGQRGDPGSRGPIGPPGR). Over residues 1127–1141 (RGDKGDHGDRGDRGQ) the composition is skewed to basic and acidic residues. The residue at position 1156 (P1156) is a 3-hydroxyproline; partial. Composition is skewed to pro residues over residues 1171-1181 (PFGPRGPPGPV) and 1211-1226 (EGPPGEPGPPGPPGPP). The propeptide at 1230–1499 (TAALGDIMGH…GVEIGPVCFV (270 aa)) is C-terminal propeptide. N1262 carries an N-linked (GlcNAc...) asparagine glycan. One can recognise a Fibrillar collagen NC1 domain in the interval 1266–1499 (PGVHATLKSL…GVEIGPVCFV (234 aa)). 3 disulfide bridges follow: C1296–C1328, C1336–C1497, and C1405–C1450. Residues D1314, N1316, Q1317, and D1322 each contribute to the Ca(2+) site. N1400 carries an N-linked (GlcNAc...) asparagine glycan.

Belongs to the fibrillar collagen family. As to quaternary structure, trimers of two alpha 1(V) and one alpha 2(V) chains in most tissues and trimers of one alpha 1(V), one alpha 2(V), and one alpha 3(V) chains in placenta. In terms of processing, prolines at the third position of the tripeptide repeating unit (G-X-P) are hydroxylated in some or all of the chains. Probably 3-hydroxylated on Pro-919 and Pro-1156 by LEPREL1.

It is found in the secreted. It localises to the extracellular space. The protein resides in the extracellular matrix. Type V collagen is a member of group I collagen (fibrillar forming collagen). It is a minor connective tissue component of nearly ubiquitous distribution. Type V collagen binds to DNA, heparan sulfate, thrombospondin, heparin, and insulin. Type V collagen is a key determinant in the assembly of tissue-specific matrices. The polypeptide is Collagen alpha-2(V) chain (COL5A2) (Homo sapiens (Human)).